Here is a 341-residue protein sequence, read N- to C-terminus: LIM and senescent cell antigen-like-containing domain protein 2 (341 aa).

LIM zinc-binding domains lie at 13-74 (AVCQ…LFAP), 76-133 (CGSC…EKAK), 138-195 (YICQ…KMGV), 196-255 (PICG…LFGD), and 256-315 (VCYN…FPLE). The residue at position 22 (Phe-22) is a Phosphoserine. Phosphothreonine is present on Thr-327. The residue at position 328 (Ser-328) is a Phosphoserine.

Interacts with TGFB1I1. Interacts with integrin-linked protein kinase 1 (ILK) via the first LIM domain, and in competition with LIMS1. Part of the heterotrimeric IPP complex composed of integrin-linked kinase (ILK), LIMS1 or LIMS2, and PARVA.

It is found in the nucleus. The protein localises to the cell junction. Its subcellular location is the focal adhesion. The protein resides in the cell membrane. Adapter protein in a cytoplasmic complex linking beta-integrins to the actin cytoskeleton, bridges the complex to cell surface receptor tyrosine kinases and growth factor receptors. Plays a role in modulating cell spreading and migration. The chain is LIM and senescent cell antigen-like-containing domain protein 2 (LIMS2) from Homo sapiens (Human).